Here is an 846-residue protein sequence, read N- to C-terminus: Aminopeptidase N (846 aa).

Residues Glu120 and 252-256 contribute to the substrate site; that span reads GAMEN. Zn(2+) is bound at residue His288. Glu289 serves as the catalytic Proton acceptor. Zn(2+) is bound by residues His292 and Glu311.

Belongs to the peptidase M1 family. As to quaternary structure, monomer. Zn(2+) is required as a cofactor.

The protein resides in the cytoplasm. The catalysed reaction is Release of an N-terminal amino acid, Xaa-|-Yaa- from a peptide, amide or arylamide. Xaa is preferably Ala, but may be most amino acids including Pro (slow action). When a terminal hydrophobic residue is followed by a prolyl residue, the two may be released as an intact Xaa-Pro dipeptide.. In terms of biological role, aminopeptidase with broad substrate specificity to several peptides. It has more affinity for oligopeptides than for dipeptides. It plays an essential role in the metabolism, it may be involved in nitrogen supply or protein turnover. This chain is Aminopeptidase N (pepN), found in Lactococcus lactis subsp. cremoris (strain MG1363).